The following is a 262-amino-acid chain: Flap endonuclease Xni (262 aa).

Residue D109 participates in Mg(2+) binding. The region spanning 165–255 is the 5'-3' exonuclease domain; that stretch reads LKPEQLADYW…FNLQDIRYEK (91 aa). K(+)-binding residues include L176, A177, I187, and V190. An interaction with DNA region spans residues 189 to 194; that stretch reads GVGPKA.

It belongs to the Xni family. Mg(2+) serves as cofactor. The cofactor is K(+).

Functionally, has flap endonuclease activity. During DNA replication, flap endonucleases cleave the 5'-overhanging flap structure that is generated by displacement synthesis when DNA polymerase encounters the 5'-end of a downstream Okazaki fragment. The chain is Flap endonuclease Xni from Aliivibrio fischeri (strain MJ11) (Vibrio fischeri).